The chain runs to 448 residues: Homogentisate 1,2-dioxygenase (448 aa).

Residue His303 is the Proton acceptor of the active site. Residues His346 and Glu352 each coordinate Fe cation. Positions 361 and 382 each coordinate homogentisate. His382 is a binding site for Fe cation.

Belongs to the homogentisate dioxygenase family. Hexamer; dimer of trimers. It depends on Fe cation as a cofactor.

The catalysed reaction is homogentisate + O2 = 4-maleylacetoacetate + H(+). It functions in the pathway amino-acid degradation; L-phenylalanine degradation; acetoacetate and fumarate from L-phenylalanine: step 4/6. Its function is as follows. Involved in the catabolism of homogentisate (2,5-dihydroxyphenylacetate or 2,5-OH-PhAc), a central intermediate in the degradation of phenylalanine and tyrosine. Catalyzes the oxidative ring cleavage of the aromatic ring of homogentisate to yield maleylacetoacetate. The chain is Homogentisate 1,2-dioxygenase from Bradyrhizobium diazoefficiens (strain JCM 10833 / BCRC 13528 / IAM 13628 / NBRC 14792 / USDA 110).